The sequence spans 367 residues: Farnesyl pyrophosphate synthase (367 aa).

Isopentenyl diphosphate-binding residues include Lys71, Arg74, and Gln110. 2 residues coordinate Mg(2+): Asp117 and Asp121. Arg126 is a binding site for dimethylallyl diphosphate. Arg127 contacts isopentenyl diphosphate. Dimethylallyl diphosphate is bound by residues Lys214, Thr215, Gln254, Lys271, and Lys280.

It belongs to the FPP/GGPP synthase family. Homodimer. Mg(2+) is required as a cofactor.

The protein localises to the cytoplasm. It catalyses the reaction isopentenyl diphosphate + dimethylallyl diphosphate = (2E)-geranyl diphosphate + diphosphate. The enzyme catalyses isopentenyl diphosphate + (2E)-geranyl diphosphate = (2E,6E)-farnesyl diphosphate + diphosphate. It functions in the pathway isoprenoid biosynthesis; farnesyl diphosphate biosynthesis; farnesyl diphosphate from geranyl diphosphate and isopentenyl diphosphate: step 1/1. It participates in isoprenoid biosynthesis; geranyl diphosphate biosynthesis; geranyl diphosphate from dimethylallyl diphosphate and isopentenyl diphosphate: step 1/1. Functionally, catalyzes the sequential condensation of isopentenyl pyrophosphate with the allylic pyrophosphates, dimethylallyl pyrophosphate, and then with the resultant geranylpyrophosphate to the ultimate product farnesyl pyrophosphate. This is Farnesyl pyrophosphate synthase (FDPS) from Gallus gallus (Chicken).